We begin with the raw amino-acid sequence, 378 residues long: Chitinase (378 aa).

Residues 1–28 (MNFTVKYSFLVICLLCCLLSTYVSVIEG) form the signal peptide. The 326-residue stretch at 53-378 (GIIQGYYPSW…AIEYFVESLH (326 aa)) folds into the GH18 domain. The active-site Proton donor is glutamate 174. An intrachain disulfide couples cysteine 220 to cysteine 230.

This sequence belongs to the glycosyl hydrolase 18 family. As to quaternary structure, forms a hetero-multimeric, high molecular weight complex composed of at least CHT1, SOAP AND WARP. Within the complex, may interact with WARP via a disulfide bond.

The protein localises to the secreted. It is found in the cytoplasmic vesicle. Its subcellular location is the secretory vesicle. It localises to the microneme. The catalysed reaction is Random endo-hydrolysis of N-acetyl-beta-D-glucosaminide (1-&gt;4)-beta-linkages in chitin and chitodextrins.. Inhibited by allosamidin. Endochitinase that cleaves beta-1,4-linkages between tri- and tetramers of N-acetylglucosamine (GlcNAc) from penta- and hexameric chitin oligomers. Does not cleave smaller chitin oligosaccharides. Required to cross the acellular, chitin-containing peritrophic matrix (PM) which is formed around the ingested blood meal in the mosquito midgut allowing the ookinete to invade the mosquito gut epithelium. The protein is Chitinase of Plasmodium falciparum (isolate 3D7).